The following is a 242-amino-acid chain: Small ribosomal subunit protein uS2 (242 aa).

Belongs to the universal ribosomal protein uS2 family.

The protein is Small ribosomal subunit protein uS2 of Shewanella putrefaciens (strain CN-32 / ATCC BAA-453).